A 261-amino-acid chain; its full sequence is Proliferating cell nuclear antigen (261 aa).

3 positions are modified to N6-acetyllysine: Lys-14, Lys-77, and Lys-80. Residues 61-80 mediate DNA binding; that stretch reads RCDRNLAMGVNLTSMSKILK. An intrachain disulfide couples Cys-135 to Cys-162. Lys-164 is covalently cross-linked (Glycyl lysine isopeptide (Lys-Gly) (interchain with G-Cter in SUMO2); alternate). Lys-164 participates in a covalent cross-link: Glycyl lysine isopeptide (Lys-Gly) (interchain with G-Cter in ubiquitin); alternate. Tyr-211 bears the Phosphotyrosine; by EGFR mark. Position 248 is an N6-acetyllysine (Lys-248). Lys-254 is covalently cross-linked (Glycyl lysine isopeptide (Lys-Gly) (interchain with G-Cter in SUMO2)).

It belongs to the PCNA family. Homotrimer. Interacts with p300/EP300; the interaction occurs on chromatin in UV-irradiated damaged cells. Interacts with CREBBP (via transactivation domain and C-terminus); the interaction occurs on chromatin in UV-irradiated damaged cells. Directly interacts with POLD1, POLD3 and POLD4 subunits of the DNA polymerase delta complex, POLD3 being the major interacting partner; the interaction with POLD3 is inhibited by CDKN1A/p21(CIP1). Forms a complex with activator 1 heteropentamer in the presence of ATP. Interacts with EXO1, POLH, POLK, DNMT1, ERCC5, FEN1, CDC6 and POLDIP2. Interacts with POLB. Interacts with APEX2; this interaction is triggered by reactive oxygen species and increased by misincorporation of uracil in nuclear DNA. Forms a ternary complex with DNTTIP2 and core histone. Interacts with KCTD10 and PPP1R15A. Interacts with SMARCA5/SNF2H. Interacts with BAZ1B/WSTF; the interaction is direct and is required for BAZ1B/WSTF binding to replication foci during S phase. Interacts with HLTF and SHPRH. Interacts with NUDT15; this interaction is disrupted in response to UV irradiation and acetylation. Interacts with CDKN1A/p21(CIP1) and CDT1; interacts via their PIP-box which also recruits the DCX(DTL) complex. The interaction with CDKN1A inhibits POLD3 binding. Interacts with DDX11. Interacts with EGFR; positively regulates PCNA. Interacts with PARPBP. Interacts (when ubiquitinated) with SPRTN; leading to enhance RAD18-mediated PCNA ubiquitination. Interacts (when polyubiquitinated) with ZRANB3. Interacts with SMARCAD1. Interacts with CDKN1C. Interacts with PCLAF (via PIP-box). Interacts with RTEL1 (via PIP-box); the interaction is direct and essential for the suppression of telomere fragility. Interacts with FAM111A (via PIP-box); the interaction is direct and required for PCNA loading on chromatin binding. Interacts with LIG1. Interacts with SETMAR. Interacts with ANKRD17. Interacts with FBXO18/FBH1 (via PIP-box); the interaction recruits the DCX(DTL) complex and promotes ubiquitination and degradation of FBXO18/FBH1. Interacts with POLN. Interacts with SDE2 (via PIP-box); the interaction is direct and prevents ultraviolet light induced monoubiquitination. Component of the replisome complex composed of at least DONSON, MCM2, MCM7, PCNA and TICRR; interaction at least with PCNA occurs during DNA replication. Interacts with MAPK15; the interaction is chromatin binding dependent and prevents MDM2-mediated PCNA destruction by inhibiting the association of PCNA with MDM2. Interacts with PARP10 (via PIP-box). Interacts with DDI2. Interacts with HMCES (via PIP-box). Interacts with TRAIP (via PIP-box). Interacts with UHRF2. Interacts with ALKBH2; this interaction is enhanced during the S-phase of the cell cycle. Interacts with ATAD5; the interaction promotes USP1-mediated PCNA deubiquitination. Interacts (when phosphorylated) with GRB2. Interacts with ANG. Interacts with nuclear UNG; this interaction mediates UNG recruitment to S-phase replication foci. Interacts with ERCC6L2 (via an atypical PIP-box); this interaction facilitates cenrtomeric localization of ERCC6L2. Phosphorylated. Phosphorylation at Tyr-211 by EGFR stabilizes chromatin-associated PCNA. Post-translationally, acetylated by CREBBP and p300/EP300; preferentially acetylated by CREBBP on Lys-80, Lys-13 and Lys-14 and on Lys-77 by p300/EP300 upon loading on chromatin in response to UV irradiation. Lysine acetylation disrupts association with chromatin, hence promoting PCNA ubiquitination and proteasomal degradation in response to UV damage in a CREBBP- and EP300-dependent manner. Acetylation disrupts interaction with NUDT15 and promotes degradation. In terms of processing, ubiquitinated. Following DNA damage, can be either monoubiquitinated to stimulate direct bypass of DNA lesions by specialized DNA polymerases or polyubiquitinated to promote recombination-dependent DNA synthesis across DNA lesions by template switching mechanisms. Following induction of replication stress, monoubiquitinated by the UBE2B-RAD18 complex on Lys-164, leading to recruit translesion (TLS) polymerases, which are able to synthesize across DNA lesions in a potentially error-prone manner. An error-free pathway also exists and requires non-canonical polyubiquitination on Lys-164 through 'Lys-63' linkage of ubiquitin moieties by the E2 complex UBE2N-UBE2V2 and the E3 ligases, HLTF, RNF8 and SHPRH. This error-free pathway, also known as template switching, employs recombination mechanisms to synthesize across the lesion, using as a template the undamaged, newly synthesized strand of the sister chromatid. Monoubiquitination at Lys-164 also takes place in undamaged proliferating cells, and is mediated by the DCX(DTL) complex, leading to enhance PCNA-dependent translesion DNA synthesis. Sumoylated during S phase. Methylated on glutamate residues by ARMT1.

It localises to the nucleus. Auxiliary protein of DNA polymerase delta and epsilon, is involved in the control of eukaryotic DNA replication by increasing the polymerase's processibility during elongation of the leading strand. Induces a robust stimulatory effect on the 3'-5' exonuclease and 3'-phosphodiesterase, but not apurinic-apyrimidinic (AP) endonuclease, APEX2 activities. Has to be loaded onto DNA in order to be able to stimulate APEX2. Plays a key role in DNA damage response (DDR) by being conveniently positioned at the replication fork to coordinate DNA replication with DNA repair and DNA damage tolerance pathways. Acts as a loading platform to recruit DDR proteins that allow completion of DNA replication after DNA damage and promote postreplication repair: Monoubiquitinated PCNA leads to recruitment of translesion (TLS) polymerases, while 'Lys-63'-linked polyubiquitination of PCNA is involved in error-free pathway and employs recombination mechanisms to synthesize across the lesion. The chain is Proliferating cell nuclear antigen (PCNA) from Cricetulus griseus (Chinese hamster).